The chain runs to 654 residues: Tetratricopeptide repeat protein 30 homolog (654 aa).

7 TPR repeats span residues 10–43, 44–76, 143–176, 178–210, 384–417, 449–483, and 533–566; these read EGHVTRTIYNLIKDKRYEDVIECITNIGEAANTR, AGLSTLGHCYYHAQKYEEAATCYEQLCQLAPKE, ADTLNDEGCLLYQADQHESAVQRFQAALQVGGFN, LVAYNVALAHFQRKQRAQALDYTSEIVERGVRN, LAAKVQEVRATNEQHALRDALKDYEQALELYLPV, AVWRLNAGHVLFMQGDKYNEAAAFYEPIVRQHSDD, and CIVNLVVGTLYCAKSNYEFGLTRIAHALEGGAGG.

It belongs to the TTC30/dfy-1/fleer family.

The protein localises to the cell projection. The protein resides in the cilium. Functionally, required for polyglutamylation of axonemal tubulin in sensory cilia. Plays a role in anterograde intraflagellar transport (IFT), the process by which cilia precursors are transported from the base of the cilium to the site of their incorporation at the tip. In Drosophila pseudoobscura pseudoobscura (Fruit fly), this protein is Tetratricopeptide repeat protein 30 homolog.